The following is a 323-amino-acid chain: tRNA U34 carboxymethyltransferase (323 aa).

Residues Lys91, Trp105, Lys110, Gly130, 152 to 154, 181 to 182, Met196, Tyr200, and Arg315 each bind carboxy-S-adenosyl-L-methionine; these read DPT and IE.

The protein belongs to the class I-like SAM-binding methyltransferase superfamily. CmoB family. Homotetramer.

It catalyses the reaction carboxy-S-adenosyl-L-methionine + 5-hydroxyuridine(34) in tRNA = 5-carboxymethoxyuridine(34) in tRNA + S-adenosyl-L-homocysteine + H(+). Catalyzes carboxymethyl transfer from carboxy-S-adenosyl-L-methionine (Cx-SAM) to 5-hydroxyuridine (ho5U) to form 5-carboxymethoxyuridine (cmo5U) at position 34 in tRNAs. This is tRNA U34 carboxymethyltransferase from Escherichia coli O157:H7.